The sequence spans 1008 residues: P3N-PIPO polyprotein (1008 aa).

A Peptidase S30 domain is found at 180–322 (QRANADVDHL…ECSKDKIHQY (143 aa)). Active-site for P1 proteinase activity residues include His-233, Glu-242, and Ser-275. The short motif at 374–377 (KVSC) is the Involved in interaction with stylet and aphid transmission element. The Involved in virions binding and aphid transmission signature appears at 631-633 (PTK). The region spanning 657–779 (MYVAKEGYCY…VSEMKHYVVG (123 aa)) is the Peptidase C6 domain. Catalysis depends on for helper component proteinase activity residues Cys-665 and His-738.

It belongs to the potyviridae P3N-PIPO polyprotein family. Interacts (via PIPO domain) with host PCaP1 protein; this interaction may help to anchor the movement complex to the plasma membrane from which the complex could move to the plasmodesmata. In terms of processing, potyviral RNA is expressed as two polyproteins which undergo post-translational proteolytic processing. Genome polyprotein is processed by NIa-pro, P1 and HC-pro proteinases resulting in the production of at least ten individual proteins. P3N-PIPO is cleaved by P1 and HC-pro proteinases resulting in the production of three individual proteins. The P1 proteinase and the HC-pro cleave only their respective C-termini autocatalytically.

The protein resides in the host cell junction. It localises to the host plasmodesma. It catalyses the reaction Hydrolyzes a Gly-|-Gly bond at its own C-terminus, commonly in the sequence -Tyr-Xaa-Val-Gly-|-Gly, in the processing of the potyviral polyprotein.. Its function is as follows. Required for aphid transmission and also has proteolytic activity. Only cleaves a Gly-Gly dipeptide at its own C-terminus. Interacts with virions and aphid stylets. Acts as a suppressor of RNA-mediated gene silencing, also known as post-transcriptional gene silencing (PTGS), a mechanism of plant viral defense that limits the accumulation of viral RNAs. May have RNA-binding activity. Allows efficient cell to cell propagation, by bypassing the host cell wall barrier. Transports viral genome to neighboring plant cells directly through plasmosdesmata, without any budding. In Peanut mottle virus (strain M), this protein is P3N-PIPO polyprotein.